The sequence spans 251 residues: Probable phosphatase Sputcn32_1369 (251 aa).

Residues histidine 8, histidine 10, histidine 16, histidine 41, glutamate 74, histidine 102, histidine 132, aspartate 193, and histidine 195 each coordinate Zn(2+).

Belongs to the PHP family. Zn(2+) is required as a cofactor.

This Shewanella putrefaciens (strain CN-32 / ATCC BAA-453) protein is Probable phosphatase Sputcn32_1369.